A 141-amino-acid chain; its full sequence is MVRRKMDEKGVSPVIGVILMVAITVILAAVIASFVFGMSNVAPAAPPSAQLQVRTGSSADTVELKHMGGDPINCTSIKVLVNGKEESNALGSSGGCSDNLLKVGETETITLSGYGGQYVELTLVDIQTNKPILMTHVTVGG.

A helical transmembrane segment spans residues 13–35 (PVIGVILMVAITVILAAVIASFV).

The protein localises to the membrane. This is an uncharacterized protein from Archaeoglobus fulgidus (strain ATCC 49558 / DSM 4304 / JCM 9628 / NBRC 100126 / VC-16).